Here is a 362-residue protein sequence, read N- to C-terminus: Heat-inducible transcription repressor HrcA (362 aa).

The protein belongs to the HrcA family.

In terms of biological role, negative regulator of class I heat shock genes (grpE-dnaK-dnaJ and groELS operons). Prevents heat-shock induction of these operons. This is Heat-inducible transcription repressor HrcA from Nitrobacter winogradskyi (strain ATCC 25391 / DSM 10237 / CIP 104748 / NCIMB 11846 / Nb-255).